The chain runs to 486 residues: MNADAKTEIKGRERYKAGVLKYAQMGYWNGDYEPKDTDLIALFRITPQDGVDPIEAAAAVAGESSTATWTVVWTDRLTACDQYRAKAYRVDPVPGTPGQYFCYVAYDLILFEEGSIANLTASIIGNVFSFKPLKAARLEDMRLPVAYVKTFRGPPTGIVVERERLDKFGKPLLGATTKPKLGLSGKNYGRVVYEGLKGGLDFMKDDENINSQPFMHWRDRYLYCMEAVNHASAVTGEVKGHYLNITAGTMEEMYRRAEFAKELGSVIVMVDLIVGWTAIQSISEWCRQNDMILHMHRAGHGTYTRQKNHGISFRVIAKWLRLAGVDHLHAGTAVGKLEGDPPTVQGYYNVCREMKNEVDLPRGLFFEQDWADLKKVMPVASGGIHAGQMHQLLDLFGDDVVLQFGGGTIGHPMGIQAGATANRVALEAMVLARNEGRDIAHEGPEILRAAAKWCKPLEAALDIWGNISFNYTPTDTSDFVPSVTAA.

Asparagine 126 and threonine 176 together coordinate substrate. Catalysis depends on lysine 178, which acts as the Proton acceptor. Position 180 (lysine 180) interacts with substrate. Lysine 204, aspartate 206, and glutamate 207 together coordinate Mg(2+). Lysine 204 is modified (N6-carboxylysine). The active-site Proton acceptor is the histidine 296. Residues arginine 297, histidine 329, and serine 381 each coordinate substrate.

The protein belongs to the RuBisCO large chain family. Type I subfamily. As to quaternary structure, heterohexadecamer of 8 large chains and 8 small chains. Requires Mg(2+) as cofactor.

The enzyme catalyses 2 (2R)-3-phosphoglycerate + 2 H(+) = D-ribulose 1,5-bisphosphate + CO2 + H2O. It catalyses the reaction D-ribulose 1,5-bisphosphate + O2 = 2-phosphoglycolate + (2R)-3-phosphoglycerate + 2 H(+). Functionally, ruBisCO catalyzes two reactions: the carboxylation of D-ribulose 1,5-bisphosphate, the primary event in carbon dioxide fixation, as well as the oxidative fragmentation of the pentose substrate. Both reactions occur simultaneously and in competition at the same active site. This chain is Ribulose bisphosphate carboxylase large chain, found in Rhizobium meliloti (strain 1021) (Ensifer meliloti).